A 226-amino-acid chain; its full sequence is MRAVVLISGGMDSLVVAAQARALGYELAAMHVNYGQRTWQKELTAFRRICSHYAIERKLEVDAAYLEHIGGSSLTDSSIPVEQADLQTVAIPSSYVPFRNASFLSMAVSWSEVIGAERIFIGAVEEDSSGYPDCRKIFYDAFNKVIELGTKPETTIEIRTPLIDLQKSEIVRKGVELDVPFFHSWSCYKSEGKACGLCDSCARRLRAFQLVGLDDPIDYEVRPDYI.

7–17 contacts ATP; it reads ISGGMDSLVVA. Zn(2+)-binding residues include Cys-187, Cys-195, Cys-198, and Cys-201.

The protein belongs to the QueC family. It depends on Zn(2+) as a cofactor.

The catalysed reaction is 7-carboxy-7-deazaguanine + NH4(+) + ATP = 7-cyano-7-deazaguanine + ADP + phosphate + H2O + H(+). The protein operates within purine metabolism; 7-cyano-7-deazaguanine biosynthesis. Catalyzes the ATP-dependent conversion of 7-carboxy-7-deazaguanine (CDG) to 7-cyano-7-deazaguanine (preQ(0)). In Chlorobium phaeobacteroides (strain BS1), this protein is 7-cyano-7-deazaguanine synthase.